Consider the following 133-residue polypeptide: Ribonuclease P protein component (133 aa).

Belongs to the RnpA family. In terms of assembly, consists of a catalytic RNA component (M1 or rnpB) and a protein subunit.

The catalysed reaction is Endonucleolytic cleavage of RNA, removing 5'-extranucleotides from tRNA precursor.. Its function is as follows. RNaseP catalyzes the removal of the 5'-leader sequence from pre-tRNA to produce the mature 5'-terminus. It can also cleave other RNA substrates such as 4.5S RNA. The protein component plays an auxiliary but essential role in vivo by binding to the 5'-leader sequence and broadening the substrate specificity of the ribozyme. The sequence is that of Ribonuclease P protein component from Pseudomonas entomophila (strain L48).